The primary structure comprises 231 residues: Small ribosomal subunit protein uS5 (231 aa).

The tract at residues 1-63 (MADLENKTVK…KSVDRANKVK (63 aa)) is disordered. Basic and acidic residues predominate over residues 29 to 60 (KRTESGAKKQIWEKRSAHDSKDMPKKSVDRAN). One can recognise an S5 DRBM domain in the interval 75 to 138 (FSEKVVNISR…KDARNHLISV (64 aa)).

This sequence belongs to the universal ribosomal protein uS5 family. In terms of assembly, part of the 30S ribosomal subunit. Contacts proteins S4 and S8.

In terms of biological role, with S4 and S12 plays an important role in translational accuracy. Functionally, located at the back of the 30S subunit body where it stabilizes the conformation of the head with respect to the body. This is Small ribosomal subunit protein uS5 from Mycoplasmopsis agalactiae (strain NCTC 10123 / CIP 59.7 / PG2) (Mycoplasma agalactiae).